We begin with the raw amino-acid sequence, 128 residues long: Iron-sulfur cluster insertion protein ErpA (128 aa).

Iron-sulfur cluster contacts are provided by Cys56, Cys120, and Cys122.

It belongs to the HesB/IscA family. In terms of assembly, homodimer. It depends on iron-sulfur cluster as a cofactor.

Functionally, required for insertion of 4Fe-4S clusters for at least IspG. In Xanthomonas axonopodis pv. citri (strain 306), this protein is Iron-sulfur cluster insertion protein ErpA.